We begin with the raw amino-acid sequence, 565 residues long: Sialate:O-sulfotransferase 2 (565 aa).

At 1-18 (MAKLWFKFQRYFRRKPVR) the chain is on the cytoplasmic side. A helical; Signal-anchor for type II membrane protein transmembrane segment spans residues 19-41 (FFTFLALYLTAGSLVFLHSGFVG). Residues 42-565 (QPAVSGNQAN…TGVPDDYYPR (524 aa)) lie on the Extracellular side of the membrane. 2 consecutive WSC domains span residues 127–219 (RAKY…YRLQ) and 230–324 (SAVF…YQTQ). N189 and N242 each carry an N-linked (GlcNAc...) asparagine glycan.

Belongs to the WSCD family.

Its subcellular location is the golgi apparatus membrane. Functionally, sialate:O-sulfotransferase which catalyzes 8-O-sulfation at the Sia-glycan level using 3'-phosphoadenosine 5'-phosphosulfate (PAPS) as a donor, forming 8-O-sulfated Sia (Sia8S)-glycans. Displays selectivity toward glycoproteins such as TF/transferrin. This Homo sapiens (Human) protein is Sialate:O-sulfotransferase 2 (WSCD2).